A 47-amino-acid polypeptide reads, in one-letter code: PhoP/PhoQ regulator MgrB (47 aa).

Residues 6–26 form a helical membrane-spanning segment; that stretch reads WVILIIVALVCLLLWAQVFNI.

This sequence belongs to the MgrB family. In terms of assembly, may form homooligomers. Probably interacts with the periplasmic domain of PhoQ.

The protein resides in the cell inner membrane. PhoP-regulated transcription is redox-sensitive, being activated when the periplasm becomes more reducing. MgrB acts between DsbA/DsbB and PhoP/PhoQ in this pathway. Represses PhoP/PhoQ signaling, possibly by binding to the periplasmic domain of PhoQ, altering its activity and that of downstream effector PhoP. In Citrobacter koseri (strain ATCC BAA-895 / CDC 4225-83 / SGSC4696), this protein is PhoP/PhoQ regulator MgrB.